The sequence spans 223 residues: N-terminal Xaa-Pro-Lys N-methyltransferase 1 (223 aa).

Methionine 1 bears the N-acetylmethionine mark. An N-acetylthreonine; in N-terminal Xaa-Pro-Lys N-methyltransferase 1, N-terminally processed modification is found at threonine 2. S-adenosyl-L-methionine is bound by residues glycine 69, arginine 74, 91 to 93 (DVT), 119 to 120 (LQ), and glutamine 135.

Belongs to the methyltransferase superfamily. NTM1 family.

The protein resides in the nucleus. It catalyses the reaction N-terminal L-alanyl-L-prolyl-L-lysyl-[protein] + 3 S-adenosyl-L-methionine = N-terminal N,N,N-trimethyl-L-alanyl-L-prolyl-L-lysyl-[protein] + 3 S-adenosyl-L-homocysteine + 3 H(+). The enzyme catalyses N-terminal L-seryl-L-prolyl-L-lysyl-[protein] + 3 S-adenosyl-L-methionine = N-terminal N,N,N-trimethyl-L-seryl-L-prolyl-L-lysyl-[protein] + 3 S-adenosyl-L-homocysteine + 3 H(+). The catalysed reaction is N-terminal L-prolyl-L-prolyl-L-lysyl-[protein] + 2 S-adenosyl-L-methionine = N-terminal N,N-dimethyl-L-prolyl-L-prolyl-L-lysyl-[protein] + 2 S-adenosyl-L-homocysteine + 2 H(+). In terms of biological role, distributive alpha-N-methyltransferase that methylates the N-terminus of target proteins containing the N-terminal motif [Ala/Gly/Pro/Ser]-Pro-Lys when the initiator Met is cleaved. Specifically catalyzes mono-, di- or tri-methylation of the exposed alpha-amino group of the Ala, Gly or Ser residue in the [Ala/Gly/Ser]-Pro-Lys motif and mono- or di-methylation of Pro in the Pro-Pro-Lys motif. Some of the substrates may be primed by NTMT2-mediated monomethylation. Catalyzes the trimethylation of the N-terminal Gly in CENPA (after removal of Met-1). Responsible for the N-terminal methylation of KLHL31, MYL2, MYL3, RB1, RCC1, RPL23A and SET. Required during mitosis for normal bipolar spindle formation and chromosome segregation via its action on RCC1. This chain is N-terminal Xaa-Pro-Lys N-methyltransferase 1 (NTMT1), found in Bos taurus (Bovine).